A 603-amino-acid chain; its full sequence is Cell division control protein 48 homolog B (603 aa).

Residues 63–70 (GPPGTGKT) and 327–334 (GPPGCSKT) contribute to the ATP site.

Belongs to the AAA ATPase family.

Its subcellular location is the nucleus. The protein resides in the cytoplasm. It localises to the cytoskeleton. It is found in the phragmoplast. Its function is as follows. Probably functions in cell division and growth processes. Interacts with certain SNAREs as part of specialized membrane fusion events where vesicles from the same organelle fuse (homotypic fusion). The sequence is that of Cell division control protein 48 homolog B (CDC48B) from Arabidopsis thaliana (Mouse-ear cress).